The primary structure comprises 443 residues: Gasdermin-A2 (443 aa).

Residues 1–249 (MSMFEDVTRA…QGSTVQMISG (249 aa)) are triggers pyroptosis. Residue 9–13 (RALAR) participates in a cardiolipin binding. 4 consecutive transmembrane segments (beta stranded) span residues 78 to 95 (NFSF…DVEV), 99 to 120 (MKVK…MLSV), 164 to 179 (VTLK…FSLN), and 183 to 197 (LGLQ…AVTI). Residues 249–312 (GEMHEDFKTL…GALDKGHEVT (64 aa)) are a coiled coil.

It belongs to the gasdermin family. In terms of assembly, homooligomer; homooligomeric ring-shaped pore complex containing 18-36 subunits when inserted in the membrane. In terms of processing, cleavage relieves autoinhibition by releasing the N-terminal moiety (Gasdermin-A2, N-terminal) that initiates pyroptosis. In contrast to Gsdma, not cleaved by bacterial effector protein SpeB. Palmitoylated. As to expression, expressed in the gastrointestinal tract, specifically from the middle to the upper region of the gastric mucosa in the glandular stomach.

It is found in the cytoplasm. It localises to the perinuclear region. Its subcellular location is the cytosol. The protein localises to the cell membrane. The full-length protein before cleavage is inactive: intramolecular interactions between N- and C-terminal domains mediate autoinhibition in the absence of activation signal. The intrinsic pyroptosis-inducing activity is carried by the released N-terminal moiety (Gasdermin-A2, N-terminal). Its function is as follows. This form constitutes the precursor of the pore-forming protein and acts as a sensor of infection: upon bacterial infection, specifically cleaved by some bacterial effector protein, releasing the N-terminal moiety (Gasdermin-A2, N-terminal) that binds to membranes and forms pores, triggering pyroptosis. In terms of biological role, pore-forming protein that causes membrane permeabilization and pyroptosis. Released upon cleavage of Gasdermin-A2, and binds to membrane inner leaflet lipids. Homooligomerizes within the membrane and forms pores of 10-15 nanometers (nm) of inner diameter, triggering pyroptosis. Binds to membrane inner leaflet lipids, such as phosphatidylinositol (4,5)-bisphosphate. This is Gasdermin-A2 from Mus musculus (Mouse).